The primary structure comprises 326 residues: Pyruvate dehydrogenase E1 component subunit alpha (326 aa).

As to quaternary structure, heterodimer of an alpha and a beta chain. It depends on thiamine diphosphate as a cofactor.

It carries out the reaction N(6)-[(R)-lipoyl]-L-lysyl-[protein] + pyruvate + H(+) = N(6)-[(R)-S(8)-acetyldihydrolipoyl]-L-lysyl-[protein] + CO2. Functionally, the pyruvate dehydrogenase complex catalyzes the overall conversion of pyruvate to acetyl-CoA and CO(2). It contains multiple copies of three enzymatic components: pyruvate dehydrogenase (E1), dihydrolipoamide acetyltransferase (E2) and lipoamide dehydrogenase (E3). This is Pyruvate dehydrogenase E1 component subunit alpha (pdhA) from Rickettsia bellii (strain RML369-C).